A 205-amino-acid chain; its full sequence is Methylthioribulose-1-phosphate dehydratase (205 aa).

Zn(2+) is bound by residues histidine 95 and histidine 97.

It belongs to the aldolase class II family. MtnB subfamily. Zn(2+) serves as cofactor.

It catalyses the reaction 5-(methylsulfanyl)-D-ribulose 1-phosphate = 5-methylsulfanyl-2,3-dioxopentyl phosphate + H2O. Its pathway is amino-acid biosynthesis; L-methionine biosynthesis via salvage pathway; L-methionine from S-methyl-5-thio-alpha-D-ribose 1-phosphate: step 2/6. In terms of biological role, catalyzes the dehydration of methylthioribulose-1-phosphate (MTRu-1-P) into 2,3-diketo-5-methylthiopentyl-1-phosphate (DK-MTP-1-P). This is Methylthioribulose-1-phosphate dehydratase from Microcystis aeruginosa (strain NIES-843 / IAM M-2473).